A 710-amino-acid polypeptide reads, in one-letter code: Cyclin-dependent kinase G-2 (710 aa).

The tract at residues 1–350 (MAAGRHGGYR…ETPEPVKPPH (350 aa)) is disordered. A compositionally biased stretch (basic and acidic residues) spans 8 to 30 (GYRDYEARERELDAEASRRSKEQ). Residues 31 to 40 (QHHHHPSGRH) show a composition bias toward basic residues. Residues 41–64 (QRGDSDPRCEADRRRDGGRSRGGR) are compositionally biased toward basic and acidic residues. The span at 124–133 (SVVAASASSP) shows a compositional bias: low complexity. Positions 144-163 (WDRDSPKPMHSDVAKGKKAV) are enriched in basic and acidic residues. Residues 170-182 (LPLPPPPPLPPQD) are compositionally biased toward pro residues. 2 stretches are compositionally biased toward basic and acidic residues: residues 183-195 (HIPERLAVEKSPM) and 209-218 (LQEHAESRVM). The segment covering 299-308 (DENEDLEVDK) has biased composition (acidic residues). Residues 335-344 (YEVRRSETPE) are compositionally biased toward basic and acidic residues. The region spanning 365–656 (FERLNKINEG…ADAALQHEWF (292 aa)) is the Protein kinase domain. Residues 371–379 (INEGTYGVV) and Lys-394 each bind ATP. The residue at position 375 (Thr-375) is a Phosphothreonine. Tyr-376 is modified (phosphotyrosine). The active-site Proton acceptor is the Asp-489. Ser-516 is subject to Phosphoserine. Residue Thr-522 is modified to Phosphothreonine.

It belongs to the protein kinase superfamily. CMGC Ser/Thr protein kinase family. CDC2/CDKX subfamily.

The catalysed reaction is L-seryl-[protein] + ATP = O-phospho-L-seryl-[protein] + ADP + H(+). The enzyme catalyses L-threonyl-[protein] + ATP = O-phospho-L-threonyl-[protein] + ADP + H(+). It carries out the reaction [DNA-directed RNA polymerase] + ATP = phospho-[DNA-directed RNA polymerase] + ADP + H(+). This chain is Cyclin-dependent kinase G-2 (CDKG-2), found in Oryza sativa subsp. indica (Rice).